Here is a 427-residue protein sequence, read N- to C-terminus: Serine/threonine-protein kinase AFC2 (427 aa).

The Protein kinase domain occupies 98-423; that stretch reads YKIYSKMGEG…AREALRHPFF (326 aa). ATP is bound by residues 104–112 and Lys-127; that span reads MGEGTFGQV. Catalysis depends on Asp-223, which acts as the Proton acceptor.

Belongs to the protein kinase superfamily. CMGC Ser/Thr protein kinase family. Lammer subfamily.

The enzyme catalyses L-seryl-[protein] + ATP = O-phospho-L-seryl-[protein] + ADP + H(+). The catalysed reaction is L-threonyl-[protein] + ATP = O-phospho-L-threonyl-[protein] + ADP + H(+). It carries out the reaction L-tyrosyl-[protein] + ATP = O-phospho-L-tyrosyl-[protein] + ADP + H(+). The polypeptide is Serine/threonine-protein kinase AFC2 (AFC2) (Arabidopsis thaliana (Mouse-ear cress)).